A 444-amino-acid chain; its full sequence is GTPase Der (444 aa).

EngA-type G domains are found at residues 3-167 and 180-353; these read PIVA…PEAE and LRLA…AECQ. GTP is bound by residues 9–16, 56–60, 119–122, 186–193, 233–237, and 298–301; these read GRPNVGKS, DTGGM, NKVD, GRPNAGKS, DTAGV, and NKTD. Positions 354 to 438 constitute a KH-like domain; it reads IRIGTGELNR…PVKVVCRASH (85 aa).

This sequence belongs to the TRAFAC class TrmE-Era-EngA-EngB-Septin-like GTPase superfamily. EngA (Der) GTPase family. Associates with the 50S ribosomal subunit.

In terms of biological role, GTPase that plays an essential role in the late steps of ribosome biogenesis. The chain is GTPase Der from Solidesulfovibrio magneticus (strain ATCC 700980 / DSM 13731 / RS-1) (Desulfovibrio magneticus).